The following is a 664-amino-acid chain: Phosphomethylpyrimidine synthase (664 aa).

Substrate-binding positions include Asn235, Met264, Tyr293, His329, 349–351, 390–393, and Glu429; these read SRG and DGMR. His433 is a binding site for Zn(2+). Tyr456 lines the substrate pocket. A Zn(2+)-binding site is contributed by His497. Positions 577, 580, and 585 each coordinate [4Fe-4S] cluster.

Belongs to the ThiC family. As to quaternary structure, homodimer. [4Fe-4S] cluster is required as a cofactor.

It carries out the reaction 5-amino-1-(5-phospho-beta-D-ribosyl)imidazole + S-adenosyl-L-methionine = 4-amino-2-methyl-5-(phosphooxymethyl)pyrimidine + CO + 5'-deoxyadenosine + formate + L-methionine + 3 H(+). The protein operates within cofactor biosynthesis; thiamine diphosphate biosynthesis. Catalyzes the synthesis of the hydroxymethylpyrimidine phosphate (HMP-P) moiety of thiamine from aminoimidazole ribotide (AIR) in a radical S-adenosyl-L-methionine (SAM)-dependent reaction. The protein is Phosphomethylpyrimidine synthase of Shewanella amazonensis (strain ATCC BAA-1098 / SB2B).